Here is a 349-residue protein sequence, read N- to C-terminus: Ion-translocating oxidoreductase complex subunit D (349 aa).

3 helical membrane passes run 37 to 57, 73 to 90, and 124 to 144; these read AFFG…ALSA, LSDN…VAIP, and AMAA…TWIA. Thr-185 is modified (FMN phosphoryl threonine). Helical transmembrane passes span 212-232, 239-259, 265-285, 291-311, and 315-335; these read ATGV…LVLL, WHIS…GFLL, GSPL…FIAT, ATSP…VYII, and GGYP…APFI.

It belongs to the NqrB/RnfD family. In terms of assembly, the complex is composed of six subunits: RnfA, RnfB, RnfC, RnfD, RnfE and RnfG. FMN is required as a cofactor.

The protein resides in the cell inner membrane. In terms of biological role, part of a membrane-bound complex that couples electron transfer with translocation of ions across the membrane. The polypeptide is Ion-translocating oxidoreductase complex subunit D (Shewanella sp. (strain W3-18-1)).